A 420-amino-acid polypeptide reads, in one-letter code: UDP-N-acetylglucosamine 1-carboxyvinyltransferase (420 aa).

Lys22–Asn23 contributes to the phosphoenolpyruvate binding site. A UDP-N-acetyl-alpha-D-glucosamine-binding site is contributed by Arg92. Cys116 functions as the Proton donor in the catalytic mechanism. At Cys116 the chain carries 2-(S-cysteinyl)pyruvic acid O-phosphothioketal. UDP-N-acetyl-alpha-D-glucosamine is bound by residues Arg121–Gln125, Asp304, and Ile326.

It belongs to the EPSP synthase family. MurA subfamily.

It is found in the cytoplasm. It catalyses the reaction phosphoenolpyruvate + UDP-N-acetyl-alpha-D-glucosamine = UDP-N-acetyl-3-O-(1-carboxyvinyl)-alpha-D-glucosamine + phosphate. The protein operates within cell wall biogenesis; peptidoglycan biosynthesis. Cell wall formation. Adds enolpyruvyl to UDP-N-acetylglucosamine. This is UDP-N-acetylglucosamine 1-carboxyvinyltransferase from Paraburkholderia phymatum (strain DSM 17167 / CIP 108236 / LMG 21445 / STM815) (Burkholderia phymatum).